Consider the following 195-residue polypeptide: Oocyte-secreted protein 3 (195 aa).

An N-terminal signal peptide occupies residues 1–21 (MKAFVASGLLLLIFGMWRCSG). N102 is a glycosylation site (N-linked (GlcNAc...) asparagine).

It belongs to the PLAC1 family. As to expression, oocyte-specific.

It is found in the secreted. The polypeptide is Oocyte-secreted protein 3 (Mus musculus (Mouse)).